The following is a 468-amino-acid chain: Zinc finger protein mex-5 (468 aa).

Positions 1–19 (MKAASNSVSSAGGSVSPTT) are enriched in low complexity. Residues 1–32 (MKAASNSVSSAGGSVSPTTTQPPLPPGQSSHP) are disordered. Residue Thr-186 is modified to Phosphothreonine; by mbk-2. Over residues 243–254 (NHFHEHRGEKFG) the composition is skewed to basic and acidic residues. A disordered region spans residues 243 to 269 (NHFHEHRGEKFGRRGFPIPETDSQQPP). C3H1-type zinc fingers lie at residues 270-299 (NYKT…HGLK) and 314-344 (KYKT…HPTD). Residues 414 to 468 (DLQAGGDYNQPESNEDDLPPHLRRNRRENPPMNKRRTSLSTKWTSEENLGLRGHY) form a disordered region. Positions 451–460 (SLSTKWTSEE) are enriched in polar residues. Ser-458 bears the Phosphoserine mark.

In terms of assembly, interacts (when phosphorylated on Thr-186) with plk-1 (via POLO box domain) and plk-2 (via POLO box domain). Phosphorylation on Ser-458 by par-1 promotes localization of the protein to the anterior cytoplasm of the zygote. Phosphorylation by mbk-1 appears to be required for subsequent phosphorylation by plk-1. In terms of tissue distribution, asymmetrically localized to the anterior of the zygote before mitotic division, then differentially distributed to the somatic blastomere precursor cells.

It is found in the cytoplasm. Functions with mex-6 to affect embryonic viability, establish soma germline asymmetry in embryos and establish plk-1, pie-1, mex-1, and pos-1 asymmetry in embryos. Also affects formation of intestinal cells. Binds to mRNA in vitro, and inhibits pgl-3-mediated P-granule formation, probably by competing with pgl-3 for binding to mRNA. Required for neg-1 expression in anterior blastomeres during embryogenesis. In Caenorhabditis elegans, this protein is Zinc finger protein mex-5.